The sequence spans 562 residues: Dihydroxy-acid dehydratase (562 aa).

Position 78 (Asp78) interacts with Mg(2+). [2Fe-2S] cluster is bound at residue Cys119. 2 residues coordinate Mg(2+): Asp120 and Lys121. Lys121 is modified (N6-carboxylysine). Cys192 lines the [2Fe-2S] cluster pocket. Glu449 is a Mg(2+) binding site. Ser475 functions as the Proton acceptor in the catalytic mechanism.

This sequence belongs to the IlvD/Edd family. As to quaternary structure, homodimer. Requires [2Fe-2S] cluster as cofactor. The cofactor is Mg(2+).

It catalyses the reaction (2R)-2,3-dihydroxy-3-methylbutanoate = 3-methyl-2-oxobutanoate + H2O. The catalysed reaction is (2R,3R)-2,3-dihydroxy-3-methylpentanoate = (S)-3-methyl-2-oxopentanoate + H2O. The protein operates within amino-acid biosynthesis; L-isoleucine biosynthesis; L-isoleucine from 2-oxobutanoate: step 3/4. It functions in the pathway amino-acid biosynthesis; L-valine biosynthesis; L-valine from pyruvate: step 3/4. Functions in the biosynthesis of branched-chain amino acids. Catalyzes the dehydration of (2R,3R)-2,3-dihydroxy-3-methylpentanoate (2,3-dihydroxy-3-methylvalerate) into 2-oxo-3-methylpentanoate (2-oxo-3-methylvalerate) and of (2R)-2,3-dihydroxy-3-methylbutanoate (2,3-dihydroxyisovalerate) into 2-oxo-3-methylbutanoate (2-oxoisovalerate), the penultimate precursor to L-isoleucine and L-valine, respectively. The chain is Dihydroxy-acid dehydratase from Aliarcobacter butzleri (strain RM4018) (Arcobacter butzleri).